Consider the following 158-residue polypeptide: MTADSKDTSMSEDNTETATAIENSSAMVTDVTSKSAPNVRLSPDALIKEFEASQQKSDLNDIYVGDTVRVGVRISEGNKERIQPYEGVVIAKRHGGIHETITVRRIFQGIGVERVFMLHSPQVASIKVERRGKVRRAKLFYLRERVGKATRVKQRFDR.

Positions 1–35 are disordered; it reads MTADSKDTSMSEDNTETATAIENSSAMVTDVTSKS. Polar residues predominate over residues 16-35; it reads ETATAIENSSAMVTDVTSKS.

It belongs to the bacterial ribosomal protein bL19 family.

In terms of biological role, this protein is located at the 30S-50S ribosomal subunit interface and may play a role in the structure and function of the aminoacyl-tRNA binding site. This chain is Large ribosomal subunit protein bL19, found in Prochlorococcus marinus (strain MIT 9313).